The chain runs to 257 residues: UPF0246 protein Sama_0917 (257 aa).

It belongs to the UPF0246 family.

In Shewanella amazonensis (strain ATCC BAA-1098 / SB2B), this protein is UPF0246 protein Sama_0917.